Consider the following 213-residue polypeptide: MKKTLLGSLILLAFAGNVQADINTETSGKVTFFGKVVENTCKVKTEHKNLSVVLNDVGKNSLSTKVNTAMPTPFTITLQNCDPTTANGTANKANKVGLYFYSWKNVDKENNFTLKNEQTTADYATNVNIQLMESNGTKAISVVGKETEDFMHTNNNGVALNQTHPNNTHISGSTQLTTGTNELPLHFIAQYYATNKATAGKVQSSVDFQIAYE.

A signal peptide spans 1 to 20 (MKKTLLGSLILLAFAGNVQA). Cys41 and Cys81 form a disulfide bridge.

Belongs to the fimbrial protein family.

Its subcellular location is the fimbrium. In terms of biological role, mediates adherence to oropharyngeal epithelial cells. Helps the airway colonization process. The polypeptide is Major fimbrial subunit (hifA) (Haemophilus influenzae).